The sequence spans 97 residues: UPF0235 protein HD_0778 (97 aa).

Belongs to the UPF0235 family.

The chain is UPF0235 protein HD_0778 from Haemophilus ducreyi (strain 35000HP / ATCC 700724).